A 356-amino-acid chain; its full sequence is Heat-inducible transcription repressor HrcA (356 aa).

It belongs to the HrcA family.

In terms of biological role, negative regulator of class I heat shock genes (grpE-dnaK-dnaJ and groELS operons). Prevents heat-shock induction of these operons. The protein is Heat-inducible transcription repressor HrcA of Chlorobaculum tepidum (strain ATCC 49652 / DSM 12025 / NBRC 103806 / TLS) (Chlorobium tepidum).